We begin with the raw amino-acid sequence, 289 residues long: 4-hydroxy-tetrahydrodipicolinate synthase (289 aa).

Position 43 (T43) interacts with pyruvate. Y131 acts as the Proton donor/acceptor in catalysis. Catalysis depends on K160, which acts as the Schiff-base intermediate with substrate. Position 200 (V200) interacts with pyruvate.

The protein belongs to the DapA family. In terms of assembly, homotetramer; dimer of dimers.

The protein localises to the cytoplasm. It catalyses the reaction L-aspartate 4-semialdehyde + pyruvate = (2S,4S)-4-hydroxy-2,3,4,5-tetrahydrodipicolinate + H2O + H(+). Its pathway is amino-acid biosynthesis; L-lysine biosynthesis via DAP pathway; (S)-tetrahydrodipicolinate from L-aspartate: step 3/4. In terms of biological role, catalyzes the condensation of (S)-aspartate-beta-semialdehyde [(S)-ASA] and pyruvate to 4-hydroxy-tetrahydrodipicolinate (HTPA). This chain is 4-hydroxy-tetrahydrodipicolinate synthase, found in Methanococcus maripaludis (strain C6 / ATCC BAA-1332).